Consider the following 215-residue polypeptide: 3-demethoxyubiquinol 3-hydroxylase (215 aa).

6 residues coordinate Fe cation: E64, E94, H97, E146, E178, and H181.

This sequence belongs to the COQ7 family. Fe cation is required as a cofactor.

The protein resides in the cell membrane. The enzyme catalyses a 5-methoxy-2-methyl-3-(all-trans-polyprenyl)benzene-1,4-diol + AH2 + O2 = a 3-demethylubiquinol + A + H2O. The protein operates within cofactor biosynthesis; ubiquinone biosynthesis. Catalyzes the hydroxylation of 2-nonaprenyl-3-methyl-6-methoxy-1,4-benzoquinol during ubiquinone biosynthesis. The chain is 3-demethoxyubiquinol 3-hydroxylase from Pseudomonas putida (strain W619).